Here is an 83-residue protein sequence, read N- to C-terminus: Bublin coiled-coil protein (83 aa).

The disordered stretch occupies residues 1–25 (MSGPNGDLGTPVEAGAEGEEDGFGE). Residues 25 to 74 (EAEYAAINSMLDQINSCLDHLEEKNDHLHARLQELLESNRQTRLEFQQQL) are a coiled coil. S82 bears the Phosphoserine mark.

Belongs to the UPF0184 (EST00098) family.

The protein resides in the cell junction. It localises to the cytoplasm. It is found in the cytoskeleton. Functionally, essential for intermediate filament organization in intestinal cells, interacts with intermediate filament and regulates intestinal lumen morphology. This chain is Bublin coiled-coil protein (BBLN), found in Bos taurus (Bovine).